The primary structure comprises 596 residues: uncharacterized protein (596 aa).

The first 20 residues, M1–A20, serve as a signal peptide directing secretion. 2 stretches are compositionally biased toward basic and acidic residues: residues A25–T90 and V161–T184. A disordered region spans residues A25–T184. 2 coiled-coil regions span residues R177–S281 and N318–D454.

The protein belongs to the peptidase M23B family.

This is an uncharacterized protein from Neisseria meningitidis serogroup B (strain ATCC BAA-335 / MC58).